The chain runs to 785 residues: Copal-8-ol diphosphate hydratase TPSSA3, chloroplastic (785 aa).

Substrate is bound at residue Arg240. Residues Asp372 and Asp374 each coordinate Mg(2+). Residues 372-375 carry the DXDD motif motif; sequence DIDD. Residue Arg459 coordinates substrate.

It belongs to the terpene synthase family. Mg(2+) serves as cofactor.

The protein localises to the plastid. Its subcellular location is the chloroplast. It carries out the reaction (2E,6E,10E)-geranylgeranyl diphosphate + H2O = 8-hydroxycopalyl diphosphate. It participates in secondary metabolite biosynthesis; terpenoid biosynthesis. Its function is as follows. Involved in the biosynthesis of labdane-type diterpenoid including sclareol, a diterpene-diol that is used as fragrance and flavoring, and has anticancer effects (able to kill leukemic and colon cancer cells by apoptosis). Sclareol can also be used as synthesis precursor of ambergris substitution fragance products such as ambrox. Terpene synthase that produces 8-hydroxycopalyl diphosphate from geranylgeranyl diphosphate (GGPP). This is Copal-8-ol diphosphate hydratase TPSSA3, chloroplastic from Salvia sclarea (Clary sage).